Reading from the N-terminus, the 349-residue chain is 5-deoxyribose 1-phosphate isomerase (349 aa).

Substrate contacts are provided by residues 49-51 (RGA), Arg-92, and Gln-199. The active-site Proton donor is the Asp-240. 250–251 (NK) serves as a coordination point for substrate.

This sequence belongs to the EIF-2B alpha/beta/delta subunits family. DrdI subfamily.

It catalyses the reaction 5-deoxy-alpha-D-ribose 1-phosphate = 5-deoxy-D-ribulose 1-phosphate. Its pathway is carbohydrate degradation. Functionally, catalyzes the isomerization of 5-deoxy-alpha-D-ribose 1-phosphate to 5-deoxy-D-ribulose 1-phosphate, as part of a 5-deoxyribose salvage pathway that recycles this toxic radical SAM enzyme by-product to mainstream metabolites. The sequence is that of 5-deoxyribose 1-phosphate isomerase from Clostridium botulinum (strain Loch Maree / Type A3).